We begin with the raw amino-acid sequence, 416 residues long: MLRVMTSRNFLTIDDFDIRGKTILLRVDMNSPMDTQGHILDDMRIRSHIATLKDLESAKVVVLAHQSRPGKKDFTTMKPHAHLLSRYLGRQVTYVDDIFGTFAKTQIASMEDGDVIMLENVRFYSEESLERTTAEQANTFMVKKLAPFVDIFLNDAFAVSHRSHLSVVGFTEVLPSGAGRVMEKELISLEKGVKSGERPSVFVLGGAKVDDSLRVTENVLTNGGADRVLLTGVVANVALAASGVNIGKANLDFIKSQGYEDQIERARGLLAKFEDKIGLPKDVALNDNKKRVEAPISELNSDSLPINDIGLETIVDYTNEIQNAKTVVLNGPAGVSEIEDFALGTHEIIKAAIKSDFSIIGGGHISVEVAHLGLEHRFSHISTGGGACIDFLAGEKLPGVEALKAAYNKYQEAKKL.

Substrate contacts are provided by residues 28-30 (DMN), R44, 65-68 (HQSR), R122, and R162. Residues E337 and 362-365 (GGHI) contribute to the ATP site.

It belongs to the phosphoglycerate kinase family. In terms of assembly, monomer.

It localises to the cytoplasm. The catalysed reaction is (2R)-3-phosphoglycerate + ATP = (2R)-3-phospho-glyceroyl phosphate + ADP. It functions in the pathway carbohydrate degradation; glycolysis; pyruvate from D-glyceraldehyde 3-phosphate: step 2/5. This Methanosarcina mazei (strain ATCC BAA-159 / DSM 3647 / Goe1 / Go1 / JCM 11833 / OCM 88) (Methanosarcina frisia) protein is Phosphoglycerate kinase.